The chain runs to 630 residues: Prolactin receptor (630 aa).

Positions 1–23 (MMTKVGEVLLLLLLPAFVPHTDG) are cleaved as a signal peptide. Residues 24–234 (THYSLPGKPT…VKVPEYLHRE (211 aa)) lie on the Extracellular side of the membrane. Fibronectin type-III domains are found at residues 31–128 (KPTE…IVQP) and 130–230 (PPEK…VPEY). 2 disulfide bridges follow: C37/C47 and C76/C87. N-linked (GlcNAc...) asparagine glycosylation is found at N92 and N101. Positions 212 and 213 each coordinate Zn(2+). The short motif at 216 to 220 (WSEWS) is the WSXWS motif element. Residues 235–258 (KSVWILVLVFSAFILLLLTWLIHM) form a helical membrane-spanning segment. Over 259–630 (NSHSLKHCML…DTATVFSVHT (372 aa)) the chain is Cytoplasmic. The Box 1 motif motif lies at 267–275 (MLPPVPGPK). The tract at residues 339-389 (KSIGSASDSDSGRGSCDSDNLLMDKSGAPKEEQQQQNQEGDQIGKETQGPK) is disordered. A compositionally biased stretch (low complexity) spans 340–357 (SIGSASDSDSGRGSCDSD). Basic and acidic residues predominate over residues 380 to 389 (QIGKETQGPK).

This sequence belongs to the type I cytokine receptor family. Type 1 subfamily.

It localises to the membrane. Its function is as follows. This is a receptor for the anterior pituitary hormone prolactin. This is Prolactin receptor (prlr) from Oreochromis niloticus (Nile tilapia).